The chain runs to 805 residues: MAQPLAFILDVPETPGDQGQGPSPYDESEVHDSFQQLIQEQSQCTAQEGLELQQREREVTGSSQQTLWRPEGTQSTATLRILASMPSRTIGRSRGAIISQYYNRTVQLRCRSSRPLLGNFVRSAWPSLRLYDLELDPTALEEEEKQSLLVKELQSLAVAQRDHMLRGMPLSLAEKRSLREKSRTPRGKWRGQPGSGGVCSCCGRLRYACVLALHSLGLALLSALQALMPWRYALKRIGGQFGSSVLSYFLFLKTLLAFNALLLLLLVAFIMGPQVAFPPALPGPAPVCTGLELLTGAGCFTHTVMYYGHYSNATLNQPCGSPLDGSQCTPRVGGLPYNMPLAYLSTVGVSFFITCITLVYSMAHSFGESYRVGSTSGIHAITVFCSWDYKVTQKRASRLQQDNIRTRLKELLAEWQLRHSPRSVCGRLRQAAVLGLVWLLCLGTALGCAVAVHVFSEFMIQSPEAAGQEAVLLVLPLVVGLLNLGAPYLCRVLAALEPHDSPVLEVYVAICRNLILKLAILGTLCYHWLGRRVGVLQGQCWEDFVGQELYRFLVMDFVLMLLDTLFGELVWRIISEKKLKRRRKPEFDIARNVLELIYGQTLTWLGVLFSPLLPAVQIIKLLLVFYVKKTSLLANCQAPRRPWLASHMSTVFLTLLCFPAFLGAAVFLCYAVWQVKPSSTCGPFRTLDTMYEAGRVWVRHLEAAGPRVSWLPWVHRYLMENTFFVFLVSALLLAVIYLNIQVVRGQRKVICLLKEQISNEGEDKIFLINKLHSIYERKEREERSRVGTTEEAAAPPALLTDEQDA.

The tract at residues 1–29 (MAQPLAFILDVPETPGDQGQGPSPYDESE) is disordered. Residues 1–209 (MAQPLAFILD…SCCGRLRYAC (209 aa)) lie on the Lumenal side of the membrane. The residue at position 89 (threonine 89) is a Phosphothreonine. An Omega-N-methylarginine modification is found at arginine 94. A glycan (N-linked (GlcNAc...) asparagine) is linked at asparagine 103. Phosphothreonine is present on threonine 105. A helical membrane pass occupies residues 210-230 (VLALHSLGLALLSALQALMPW). Residues 231–249 (RYALKRIGGQFGSSVLSYF) lie on the Cytoplasmic side of the membrane. Residues 250–270 (LFLKTLLAFNALLLLLLVAFI) traverse the membrane as a helical segment. The Lumenal segment spans residues 271–338 (MGPQVAFPPA…TPRVGGLPYN (68 aa)). An N-linked (GlcNAc...) asparagine glycan is attached at asparagine 312. The helical transmembrane segment at 339–359 (MPLAYLSTVGVSFFITCITLV) threads the bilayer. The Cytoplasmic segment spans residues 360-431 (YSMAHSFGES…RSVCGRLRQA (72 aa)). Residues 432–452 (AVLGLVWLLCLGTALGCAVAV) traverse the membrane as a helical segment. At 453 to 469 (HVFSEFMIQSPEAAGQE) the chain is on the lumenal side. Residues 470–490 (AVLLVLPLVVGLLNLGAPYLC) traverse the membrane as a helical segment. Residues 491–505 (RVLAALEPHDSPVLE) lie on the Cytoplasmic side of the membrane. Residues 506 to 526 (VYVAICRNLILKLAILGTLCY) traverse the membrane as a helical segment. Residues 527–553 (HWLGRRVGVLQGQCWEDFVGQELYRFL) lie on the Lumenal side of the membrane. A helical membrane pass occupies residues 554 to 574 (VMDFVLMLLDTLFGELVWRII). At 575–604 (SEKKLKRRRKPEFDIARNVLELIYGQTLTW) the chain is on the cytoplasmic side. The chain crosses the membrane as a helical span at residues 605–625 (LGVLFSPLLPAVQIIKLLLVF). Residues 626-650 (YVKKTSLLANCQAPRRPWLASHMST) lie on the Lumenal side of the membrane. A helical membrane pass occupies residues 651–671 (VFLTLLCFPAFLGAAVFLCYA). Residues 672-722 (VWQVKPSSTCGPFRTLDTMYEAGRVWVRHLEAAGPRVSWLPWVHRYLMENT) are Cytoplasmic-facing. A helical membrane pass occupies residues 723 to 743 (FFVFLVSALLLAVIYLNIQVV). Over 744–805 (RGQRKVICLL…PALLTDEQDA (62 aa)) the chain is Lumenal. The interval 778–805 (KEREERSRVGTTEEAAAPPALLTDEQDA) is disordered.

The protein belongs to the TMC family. In terms of assembly, interacts with TMC8. Interacts and forms a complex with TMC8 and CIB1; the interaction stabilizes each component of the complex. Interacts and forms a complex with TMC8 and SLC30A1/ZNT1; the interaction regulates zinc transport into the ER. As to quaternary structure, (Microbial infection) Interacts with human papillomavirus 16/HPV16 protein E5; the interaction alleviates TMC6-mediated transcription factors inhibition. In terms of tissue distribution, expressed in placenta, prostate, testis, activated T-lymphocytes and lymphokine-activated killer (LAK) lymphocytes.

It is found in the endoplasmic reticulum membrane. The protein resides in the golgi apparatus membrane. It localises to the nucleus membrane. Acts as a regulatory protein involved in the regulation of numerous cellular processes. Together with its homolog TMC8/EVER2, forms a complex with CIB1 in lymphocytes and keratynocytes where TMC6 and TMC8 stabilize CIB1 and reciprocally. Together with TMC8, also forms a complex with and activates zinc transporter ZNT1 at the ER membrane of keratynocytes, thereby facilitating zinc uptake into the ER. Down-regulates the activity of transcription factors induced by zinc and cytokines. Also plays a role in thermal sensation by inhibiting the M-channel (KCNQ2-KCNQ3 channel) current in primary sensory neurons. This is Transmembrane channel-like protein 6 from Homo sapiens (Human).